We begin with the raw amino-acid sequence, 259 residues long: Thiazole synthase (259 aa).

K98 acts as the Schiff-base intermediate with DXP in catalysis. 1-deoxy-D-xylulose 5-phosphate is bound by residues G159, 185 to 186 (AG), and 207 to 208 (NS).

It belongs to the ThiG family. In terms of assembly, homotetramer. Forms heterodimers with either ThiH or ThiS.

It localises to the cytoplasm. It catalyses the reaction [ThiS sulfur-carrier protein]-C-terminal-Gly-aminoethanethioate + 2-iminoacetate + 1-deoxy-D-xylulose 5-phosphate = [ThiS sulfur-carrier protein]-C-terminal Gly-Gly + 2-[(2R,5Z)-2-carboxy-4-methylthiazol-5(2H)-ylidene]ethyl phosphate + 2 H2O + H(+). Its pathway is cofactor biosynthesis; thiamine diphosphate biosynthesis. Functionally, catalyzes the rearrangement of 1-deoxy-D-xylulose 5-phosphate (DXP) to produce the thiazole phosphate moiety of thiamine. Sulfur is provided by the thiocarboxylate moiety of the carrier protein ThiS. In vitro, sulfur can be provided by H(2)S. The protein is Thiazole synthase of Chlorobium phaeovibrioides (strain DSM 265 / 1930) (Prosthecochloris vibrioformis (strain DSM 265)).